Here is a 179-residue protein sequence, read N- to C-terminus: Large ribosomal subunit protein uL5 (179 aa).

The protein belongs to the universal ribosomal protein uL5 family. As to quaternary structure, part of the 50S ribosomal subunit; part of the 5S rRNA/L5/L18/L25 subcomplex. Contacts the 5S rRNA and the P site tRNA. Forms a bridge to the 30S subunit in the 70S ribosome.

In terms of biological role, this is one of the proteins that bind and probably mediate the attachment of the 5S RNA into the large ribosomal subunit, where it forms part of the central protuberance. In the 70S ribosome it contacts protein S13 of the 30S subunit (bridge B1b), connecting the 2 subunits; this bridge is implicated in subunit movement. Contacts the P site tRNA; the 5S rRNA and some of its associated proteins might help stabilize positioning of ribosome-bound tRNAs. The chain is Large ribosomal subunit protein uL5 from Vibrio campbellii (strain ATCC BAA-1116).